The sequence spans 572 residues: Urease subunit alpha (572 aa).

In terms of domain architecture, Urease spans 134 to 572 (GGIDSHIHFI…LPLTQRYFLF (439 aa)). Ni(2+) is bound by residues H139, H141, and K222. Position 222 is an N6-carboxylysine (K222). H224 is a binding site for substrate. Positions 251 and 277 each coordinate Ni(2+). The Proton donor role is filled by H325. D365 lines the Ni(2+) pocket.

Belongs to the metallo-dependent hydrolases superfamily. Urease alpha subunit family. Heterotrimer of UreA (gamma), UreB (beta) and UreC (alpha) subunits. Three heterotrimers associate to form the active enzyme. The cofactor is Ni cation. In terms of processing, carboxylation allows a single lysine to coordinate two nickel ions.

Its subcellular location is the cytoplasm. It catalyses the reaction urea + 2 H2O + H(+) = hydrogencarbonate + 2 NH4(+). It functions in the pathway nitrogen metabolism; urea degradation; CO(2) and NH(3) from urea (urease route): step 1/1. The protein is Urease subunit alpha of Variovorax paradoxus (strain S110).